The following is a 428-amino-acid chain: MSVNLLKETGPREVFCGLTSIVWLHRRMPDAFFLVVGSRTCAHLIQSAAGVMIFAEPRFGTAILSERDLAGLADAQDELDRVARELLERRPEIRTLFLVGSCPSEVIKLDLARAAERLNDELRGRVQVVNYSGSGIETTFTQGEDGALSALVPLLPSTDQRQLLMVGTLADAVEDRLTHLFGRIGIDSVCSLPPRKSTELPAVGPGTTVLLTQPYLTTTARLLRDRGARVLTAPFPLGAEGSRSWMEAAAKDFQINADQVASVLDPLVARAQSALAPHREILNGKRIFLLPESQLELPLARFLQRECGMELVEVGTPYLNREQMAEELALLPEGTSVMEGQHVENQLDRVRATQPDLVVCGMGLANPLEAEGIATKWSIELVFSPIHGIDQAGELAELFSRPLRRRELIRQALNPPSSALIDSDPVHA.

3 residues coordinate [4Fe-4S] cluster: Cys16, Cys41, and Cys102.

This sequence belongs to the BchN/ChlN family. In terms of assembly, protochlorophyllide reductase is composed of three subunits; ChlL, ChlN and ChlB. Forms a heterotetramer of two ChlB and two ChlN subunits. It depends on [4Fe-4S] cluster as a cofactor.

The catalysed reaction is chlorophyllide a + oxidized 2[4Fe-4S]-[ferredoxin] + 2 ADP + 2 phosphate = protochlorophyllide a + reduced 2[4Fe-4S]-[ferredoxin] + 2 ATP + 2 H2O. The protein operates within porphyrin-containing compound metabolism; chlorophyll biosynthesis (light-independent). In terms of biological role, component of the dark-operative protochlorophyllide reductase (DPOR) that uses Mg-ATP and reduced ferredoxin to reduce ring D of protochlorophyllide (Pchlide) to form chlorophyllide a (Chlide). This reaction is light-independent. The NB-protein (ChlN-ChlB) is the catalytic component of the complex. The polypeptide is Light-independent protochlorophyllide reductase subunit N (Synechococcus sp. (strain CC9311)).